Consider the following 121-residue polypeptide: SLVELGKMILQETGKNAIPSYGFYGCNCGWGGRGKPKDATDRCCFVHKCCYKKLTDCDPKTDIYSYSWKNKTIICDVNNPCLKEMCECDKAVAICLRENLDTYNKKYRIYPKFLCKKPDTC.

7 cysteine pairs are disulfide-bonded: Cys-26–Cys-115, Cys-28–Cys-44, Cys-43–Cys-95, Cys-49–Cys-121, Cys-50–Cys-88, Cys-57–Cys-81, and Cys-75–Cys-86. Positions 105–117 are important for membrane-damaging activities in eukaryotes and bacteria; heparin-binding; it reads KKYRIYPKFLCKK.

This sequence belongs to the phospholipase A2 family. Group II subfamily. K49 sub-subfamily. As to quaternary structure, homodimer; non-covalently-linked. As to expression, expressed by the venom gland.

The protein localises to the secreted. Its function is as follows. Snake venom phospholipase A2 (PLA2) that lacks enzymatic inactivity. It shows antibacterial activity against both Gram-negative and Gram-positive bacteria, including methicillin-resistant strains. In vivo, it causes local muscular damage, but no systemic damage (intravenous administration does not elevate plasma creatine kinase). Also causes an inflammatory activity that is demonstrated by mice paw edema induction and pro-inflammatory cytokine IL-6 elevation. A model of myotoxic mechanism has been proposed: an apo Lys49-PLA2 is activated by the entrance of a hydrophobic molecule (e.g. fatty acid) at the hydrophobic channel of the protein leading to a reorientation of a monomer. This reorientation causes a transition between 'inactive' to 'active' states, causing alignment of C-terminal and membrane-docking sites (MDoS) side-by-side and putting the membrane-disruption sites (MDiS) in the same plane, exposed to solvent and in a symmetric position for both monomers. The MDoS region stabilizes the toxin on membrane by the interaction of charged residues with phospholipid head groups. Subsequently, the MDiS region destabilizes the membrane with penetration of hydrophobic residues. This insertion causes a disorganization of the membrane, allowing an uncontrolled influx of ions (i.e. calcium and sodium), and eventually triggering irreversible intracellular alterations and cell death. The sequence is that of Basic phospholipase A2 CoaTx-II from Crotalus lutosus abyssus (Grand Canyon rattlesnake).